The following is a 237-amino-acid chain: Phosphoribosylaminoimidazole-succinocarboxamide synthase (237 aa).

This sequence belongs to the SAICAR synthetase family.

It carries out the reaction 5-amino-1-(5-phospho-D-ribosyl)imidazole-4-carboxylate + L-aspartate + ATP = (2S)-2-[5-amino-1-(5-phospho-beta-D-ribosyl)imidazole-4-carboxamido]succinate + ADP + phosphate + 2 H(+). It participates in purine metabolism; IMP biosynthesis via de novo pathway; 5-amino-1-(5-phospho-D-ribosyl)imidazole-4-carboxamide from 5-amino-1-(5-phospho-D-ribosyl)imidazole-4-carboxylate: step 1/2. This Yersinia enterocolitica serotype O:8 / biotype 1B (strain NCTC 13174 / 8081) protein is Phosphoribosylaminoimidazole-succinocarboxamide synthase.